An 85-amino-acid polypeptide reads, in one-letter code: Large ribosomal subunit protein bL31B (85 aa).

This sequence belongs to the bacterial ribosomal protein bL31 family. Type B subfamily. Part of the 50S ribosomal subunit.

The protein is Large ribosomal subunit protein bL31B of Kocuria rhizophila (strain ATCC 9341 / DSM 348 / NBRC 103217 / DC2201).